Consider the following 290-residue polypeptide: Thioredoxin-like protein 1 (290 aa).

Residues 24–104 (VDCYADWCGP…PQALKEKVAL (81 aa)) form the Thioredoxin domain. Residues Cys-31 and Cys-34 are joined by a disulfide bond. In terms of domain architecture, PITH spans 118–290 (SSSAPVKGFA…SKGKLQKVEA (173 aa)).

The protein localises to the cytoplasm. Its subcellular location is the nucleus. Its function is as follows. Has a role in cellular detoxification of alkyl hydroperoxide. This Schizosaccharomyces pombe (strain 972 / ATCC 24843) (Fission yeast) protein is Thioredoxin-like protein 1 (txl1).